The primary structure comprises 306 residues: 2-phospho-L-lactate transferase (306 aa).

Asp-48 lines the 7,8-didemethyl-8-hydroxy-5-deazariboflavin pocket.

Belongs to the CofD family. As to quaternary structure, homodimer. Requires Mg(2+) as cofactor.

It catalyses the reaction (2S)-lactyl-2-diphospho-5'-guanosine + 7,8-didemethyl-8-hydroxy-5-deazariboflavin = oxidized coenzyme F420-0 + GMP + H(+). It functions in the pathway cofactor biosynthesis; coenzyme F420 biosynthesis. In terms of biological role, catalyzes the transfer of the 2-phospholactate moiety from (2S)-lactyl-2-diphospho-5'-guanosine to 7,8-didemethyl-8-hydroxy-5-deazariboflavin (FO) with the formation of oxidized coenzyme F420-0 and GMP. The chain is 2-phospho-L-lactate transferase from Methanococcoides burtonii (strain DSM 6242 / NBRC 107633 / OCM 468 / ACE-M).